A 135-amino-acid polypeptide reads, in one-letter code: ATP synthase epsilon chain, chloroplastic (135 aa).

Belongs to the ATPase epsilon chain family. In terms of assembly, F-type ATPases have 2 components, CF(1) - the catalytic core - and CF(0) - the membrane proton channel. CF(1) has five subunits: alpha(3), beta(3), gamma(1), delta(1), epsilon(1). CF(0) has three main subunits: a, b and c.

The protein localises to the plastid. It is found in the chloroplast thylakoid membrane. In terms of biological role, produces ATP from ADP in the presence of a proton gradient across the membrane. The chain is ATP synthase epsilon chain, chloroplastic from Euglena gracilis.